Here is a 167-residue protein sequence, read N- to C-terminus: MTDAADLPYRRNVGAMLFNAQGRILIGRRTDQPGAGGPLDGGVWQCPQGGIDADEDPEEAVLRELREEIGTDRAVIMGARPDWLTYDLPAALIGRALGGRYRGQTQKWFALRFTGQDSDIRLDDQQPPEFDAWQWIDLPSLPERNVGFKRDIYRTLVRDFARFSQPA.

In terms of domain architecture, Nudix hydrolase spans 8–158 (PYRRNVGAML…KRDIYRTLVR (151 aa)). Residues 49-70 (GGIDADEDPEEAVLRELREEIG) carry the Nudix box motif.

The protein belongs to the Nudix hydrolase family. RppH subfamily. The cofactor is a divalent metal cation.

Accelerates the degradation of transcripts by removing pyrophosphate from the 5'-end of triphosphorylated RNA, leading to a more labile monophosphorylated state that can stimulate subsequent ribonuclease cleavage. The chain is RNA pyrophosphohydrolase from Gluconacetobacter diazotrophicus (strain ATCC 49037 / DSM 5601 / CCUG 37298 / CIP 103539 / LMG 7603 / PAl5).